A 196-amino-acid polypeptide reads, in one-letter code: FMN-dependent NADH:quinone oxidoreductase (196 aa).

Serine 10 is a binding site for FMN.

The protein belongs to the azoreductase type 1 family. Homodimer. It depends on FMN as a cofactor.

It carries out the reaction 2 a quinone + NADH + H(+) = 2 a 1,4-benzosemiquinone + NAD(+). It catalyses the reaction N,N-dimethyl-1,4-phenylenediamine + anthranilate + 2 NAD(+) = 2-(4-dimethylaminophenyl)diazenylbenzoate + 2 NADH + 2 H(+). In terms of biological role, quinone reductase that provides resistance to thiol-specific stress caused by electrophilic quinones. Its function is as follows. Also exhibits azoreductase activity. Catalyzes the reductive cleavage of the azo bond in aromatic azo compounds to the corresponding amines. This Cereibacter sphaeroides (strain ATCC 17029 / ATH 2.4.9) (Rhodobacter sphaeroides) protein is FMN-dependent NADH:quinone oxidoreductase.